The following is a 238-amino-acid chain: MLEFSSEVSLLDSVKNILLEYGLRFQEPQIEKVDKYIEELLGVPYNLTAHRDLDSAVHKNVVEILLPLKEELKGTLLDVGSGNGVPGLILAIFFSKLKVVLLDSREKSVNFLRGVIEKLDLENVSVVKERAENFSKERREEFDYVTARAVARLNVLVEICTPALKTGGKLLFYKGPSYIEELKEAQRAMKELKVELEKVREYSLKTGERRALLILRKYESSPEKYPRRVGVPFKRPLL.

Residues G80, 131 to 132, and R148 contribute to the S-adenosyl-L-methionine site; that span reads AE.

It belongs to the methyltransferase superfamily. RNA methyltransferase RsmG family.

The protein resides in the cytoplasm. Functionally, specifically methylates the N7 position of a guanine in 16S rRNA. This Thermotoga maritima (strain ATCC 43589 / DSM 3109 / JCM 10099 / NBRC 100826 / MSB8) protein is Ribosomal RNA small subunit methyltransferase G.